The following is a 345-amino-acid chain: MAESYKNAGVDIHAGYEAVERMKSHVQRTMRKEVLGGLGGFGAAFDLSQLNMQKPVLVSGTDGVGTKLKLAIDHDKHDTIGIDAVAMCVNDILTTGAEPLYFLDYIATNKVVPEVIEQIVKGVSDGCEETNTALIGGETAEMGEMYHEGEYDLAGFAVGAVEKDDYIDGSTVKPGQVIIGLASSGIHSNGYSLVRHLIKASEVDLNAEFENGKSYLDTFLEPTRLYVKPVLAVKEQVKLYAMTHITGGGFYENIPRALPEGVTAEIDVQSFPTPAVFDWLQKEGNIETEEMYNIFNMGIGFTLVVDEAEAEKTLSILKEQNVDAYQIGKITEASDEPIVLTGVKA.

It belongs to the AIR synthase family.

It is found in the cytoplasm. The catalysed reaction is 2-formamido-N(1)-(5-O-phospho-beta-D-ribosyl)acetamidine + ATP = 5-amino-1-(5-phospho-beta-D-ribosyl)imidazole + ADP + phosphate + H(+). It participates in purine metabolism; IMP biosynthesis via de novo pathway; 5-amino-1-(5-phospho-D-ribosyl)imidazole from N(2)-formyl-N(1)-(5-phospho-D-ribosyl)glycinamide: step 2/2. In Staphylococcus carnosus (strain TM300), this protein is Phosphoribosylformylglycinamidine cyclo-ligase.